Consider the following 343-residue polypeptide: Biotin synthase (343 aa).

In terms of domain architecture, Radical SAM core spans 36–254 (NTIQISTLLS…IAVARIMMPK (219 aa)). Residues cysteine 51, cysteine 55, and cysteine 58 each coordinate [4Fe-4S] cluster. The [2Fe-2S] cluster site is built by cysteine 95, cysteine 126, cysteine 186, and arginine 258.

It belongs to the radical SAM superfamily. Biotin synthase family. In terms of assembly, homodimer. [4Fe-4S] cluster serves as cofactor. It depends on [2Fe-2S] cluster as a cofactor.

The catalysed reaction is (4R,5S)-dethiobiotin + (sulfur carrier)-SH + 2 reduced [2Fe-2S]-[ferredoxin] + 2 S-adenosyl-L-methionine = (sulfur carrier)-H + biotin + 2 5'-deoxyadenosine + 2 L-methionine + 2 oxidized [2Fe-2S]-[ferredoxin]. It functions in the pathway cofactor biosynthesis; biotin biosynthesis; biotin from 7,8-diaminononanoate: step 2/2. In terms of biological role, catalyzes the conversion of dethiobiotin (DTB) to biotin by the insertion of a sulfur atom into dethiobiotin via a radical-based mechanism. The chain is Biotin synthase from Buchnera aphidicola subsp. Acyrthosiphon pisum (strain APS) (Acyrthosiphon pisum symbiotic bacterium).